The sequence spans 418 residues: Gamma-glutamyl phosphate reductase (418 aa).

Belongs to the gamma-glutamyl phosphate reductase family.

Its subcellular location is the cytoplasm. The catalysed reaction is L-glutamate 5-semialdehyde + phosphate + NADP(+) = L-glutamyl 5-phosphate + NADPH + H(+). Its pathway is amino-acid biosynthesis; L-proline biosynthesis; L-glutamate 5-semialdehyde from L-glutamate: step 2/2. Its function is as follows. Catalyzes the NADPH-dependent reduction of L-glutamate 5-phosphate into L-glutamate 5-semialdehyde and phosphate. The product spontaneously undergoes cyclization to form 1-pyrroline-5-carboxylate. The sequence is that of Gamma-glutamyl phosphate reductase from Geobacter sp. (strain M21).